The sequence spans 214 residues: Riboflavin kinase (214 aa).

Residues 1–91 (MRSIMEVETL…YCSIFEDGGA (91 aa)) form an H-T-H motif-like region. The interval 92–214 (PVMRGKVVTG…DGDEVEVTLE (123 aa)) is riboflavin kinase. 101 to 106 (GLGEGQ) contacts CDP. Positions 130 and 132 each coordinate Mg(2+). Threonine 182 and glutamate 190 together coordinate FMN. 195-198 (IKLR) contacts CDP.

The protein belongs to the archaeal riboflavin kinase family. It depends on Mg(2+) as a cofactor.

The enzyme catalyses riboflavin + CTP = CDP + FMN + H(+). The protein operates within cofactor biosynthesis; FMN biosynthesis; FMN from riboflavin (CTP route): step 1/1. Functionally, catalyzes the CTP-dependent phosphorylation of riboflavin (vitamin B2) to form flavin mononucleotide (FMN). The chain is Riboflavin kinase (ribK) from Methanocella arvoryzae (strain DSM 22066 / NBRC 105507 / MRE50).